The sequence spans 429 residues: Septin-11 (429 aa).

Position 2 is an N-acetylalanine (Ala-2). The residue at position 9 (Ser-9) is a Phosphoserine. One can recognise a Septin-type G domain in the interval 38 to 304 (QGFCFNILCV…ELYRRCKLEE (267 aa)). The segment at 48 to 55 (GETGIGKS) is G1 motif. GTP is bound by residues 48-55 (GETGIGKS), Gly-103, 184-192 (KADTIAKNE), Gly-238, and Arg-253. The segment at 100 to 103 (DTVG) is G3 motif. The interval 183 to 186 (AKAD) is G4 motif. Residues 320 to 415 (QETYEAKRNE…QSQAQQSGAQ (96 aa)) adopt a coiled-coil conformation. Positions 398-429 (KKAAAQLLQSQAQQSGAQQTKKDKDKKNASFT) are disordered. A compositionally biased stretch (low complexity) spans 401–416 (AAQLLQSQAQQSGAQQ). The span at 417–429 (TKKDKDKKNASFT) shows a compositional bias: basic and acidic residues.

Belongs to the TRAFAC class TrmE-Era-EngA-EngB-Septin-like GTPase superfamily. Septin GTPase family. As to quaternary structure, septins polymerize into heterooligomeric protein complexes that form filaments, and can associate with cellular membranes, actin filaments and microtubules. Forms homooligomers. GTPase activity is required for filament formation. Interacts with SEPTIN7, SEPTIN9 and SEPTIN12. Widely expressed, except in leukocytes.

Its subcellular location is the cytoplasm. It is found in the cytoskeleton. The protein localises to the synapse. It localises to the cell projection. The protein resides in the dendritic spine. Its subcellular location is the axon. Filament-forming cytoskeletal GTPase. May play a role in cytokinesis (Potential). May play a role in the cytoarchitecture of neurons, including dendritic arborization and dendritic spines, and in GABAergic synaptic connectivity. During Listeria monocytogenes infection, not required for the bacterial entry process, but restricts its efficacy. This is Septin-11 from Homo sapiens (Human).